Reading from the N-terminus, the 518-residue chain is UNC5C-like protein (518 aa).

Residues 1 to 10 (MSPQESSVQP) are Extracellular-facing. Residues 11–31 (SQFLLLVGIPVASALLLAQCL) traverse the membrane as a helical; Signal-anchor for type III membrane protein segment. At 32–518 (RWHCCQWLPG…NHGLELDEKL (487 aa)) the chain is on the cytoplasmic side. In terms of domain architecture, ZU5 spans 102 to 237 (VFSAREVDHR…FSLYTCVLEA (136 aa)). The segment at 186–400 (QQPSQACAYS…ETWAVPPPVS (215 aa)) is interaction with RELA and NFKB1. Positions 208-235 (PLGQPGTHISRDECRILLSHFSLYTCVL) are peptidase S68. Active-site residues include His227 and Ser229. The Death domain occupies 415–494 (QLQMLLEPNS…SAIQNYLNRS (80 aa)).

Belongs to the unc-5 family. As to quaternary structure, interacts with p65/RELA and NFKB1.

The protein localises to the membrane. Its subcellular location is the cytoplasm. Inhibits NF-kappa-B-dependent transcription by impairing NF-kappa-B binding to its targets. This Mus musculus (Mouse) protein is UNC5C-like protein (Unc5cl).